The primary structure comprises 166 residues: Ribosome maturation factor RimM (166 aa).

A PRC barrel domain is found at 90–163 (EGEFLVSQII…TVTIELLEGL (74 aa)).

Belongs to the RimM family. Binds ribosomal protein uS19.

Its subcellular location is the cytoplasm. Functionally, an accessory protein needed during the final step in the assembly of 30S ribosomal subunit, possibly for assembly of the head region. Essential for efficient processing of 16S rRNA. May be needed both before and after RbfA during the maturation of 16S rRNA. It has affinity for free ribosomal 30S subunits but not for 70S ribosomes. The protein is Ribosome maturation factor RimM of Oenococcus oeni (strain ATCC BAA-331 / PSU-1).